A 563-amino-acid chain; its full sequence is Arginine--tRNA ligase (563 aa).

The 'HIGH' region signature appears at 121-131 (PNIAKPFSIGH).

It belongs to the class-I aminoacyl-tRNA synthetase family. As to quaternary structure, monomer.

Its subcellular location is the cytoplasm. It carries out the reaction tRNA(Arg) + L-arginine + ATP = L-arginyl-tRNA(Arg) + AMP + diphosphate. The protein is Arginine--tRNA ligase of Streptococcus agalactiae serotype III (strain NEM316).